The chain runs to 193 residues: Ion-translocating oxidoreductase complex subunit A (193 aa).

6 helical membrane passes run 5–25, 39–59, 72–92, 102–122, 134–154, and 171–191; these read ILLI…FLGL, IGMG…AYLV, LRTL…EMVI, LLGI…VALL, VIYG…FAAL, and SIAL…SGLV.

This sequence belongs to the NqrDE/RnfAE family. As to quaternary structure, the complex is composed of six subunits: RnfA, RnfB, RnfC, RnfD, RnfE and RnfG.

Its subcellular location is the cell inner membrane. Part of a membrane-bound complex that couples electron transfer with translocation of ions across the membrane. This is Ion-translocating oxidoreductase complex subunit A from Histophilus somni (strain 2336) (Haemophilus somnus).